A 169-amino-acid chain; its full sequence is Ribosome maturation factor RimP (169 aa).

It belongs to the RimP family.

The protein resides in the cytoplasm. In terms of biological role, required for maturation of 30S ribosomal subunits. The protein is Ribosome maturation factor RimP of Koribacter versatilis (strain Ellin345).